Consider the following 329-residue polypeptide: MNKWGVGLTFLLAATSVMAKDIQLLNVSYDPTRELYEQYNKAFSAHWKQQTGDNVVIRQSHGGSGKQATSVINGIEADVVTLALAYDVDAIAERGRIDKEWIKRLPDNSAPYTSTIVFLVRKGNPKQIHDWNDLIKPGVSVITPNPKSSGGARWNYLAAWGYALHHNNNDQAKAQDFVRALYKNVEVLDSGARGSTNTFVERGIGDVLIAWENEALLAANELGKDKFEIVTPSESILAEPTVSVVDKVVEKKGTKEVAEAYLKYLYSPEGQEIAAKNYYRPRDAEVAKKYENAFPKLKLFTIDEEFGGWTKAQKEHFANGGTFDQISKR.

The N-terminal stretch at Met-1–Ala-19 is a signal peptide.

It belongs to the prokaryotic sulfate-binding protein family.

The protein resides in the periplasm. This protein specifically binds sulfate and is involved in its transmembrane transport. In Escherichia coli (strain K12), this protein is Sulfate-binding protein (sbp).